Reading from the N-terminus, the 260-residue chain is Ribosomal protein L11 methyltransferase (260 aa).

S-adenosyl-L-methionine contacts are provided by Thr-119, Gly-140, Asp-162, and Asn-203.

This sequence belongs to the methyltransferase superfamily. PrmA family.

It is found in the cytoplasm. It catalyses the reaction L-lysyl-[protein] + 3 S-adenosyl-L-methionine = N(6),N(6),N(6)-trimethyl-L-lysyl-[protein] + 3 S-adenosyl-L-homocysteine + 3 H(+). In terms of biological role, methylates ribosomal protein L11. This is Ribosomal protein L11 methyltransferase from Thermosipho africanus (strain TCF52B).